The primary structure comprises 769 residues: Integrin beta-8 (769 aa).

Residues 1–42 form the signal peptide; the sequence is MCGSALAFFTAAFVCLQNDRRGPASFLWAAWVFSLVLGLGQG. The Extracellular segment spans residues 43-684; the sequence is EDNRCASSNA…ECFSSPSYLR (642 aa). The PSI domain occupies 46–95; it reads RCASSNAASCARCLALGPECGWCVQEDFISGGSRSERCDIVSNLISKGCS. Intrachain disulfides connect Cys47-Cys65, Cys55-Cys469, Cys58-Cys83, Cys68-Cys94, Cys211-Cys218, Cys266-Cys307, Cys407-Cys419, Cys439-Cys467, Cys471-Cys491, Cys471-Cys494, Cys481-Cys494, Cys499-Cys528, Cys511-Cys526, Cys520-Cys531, Cys533-Cys546, Cys553-Cys567, Cys561-Cys572, Cys574-Cys583, Cys585-Cys609, Cys593-Cys607, Cys601-Cys612, Cys614-Cys624, Cys627-Cys630, Cys634-Cys661, and Cys640-Cys657. The 239-residue stretch at 146 to 384 folds into the VWFA domain; the sequence is PVDLYYLVDV…NLVVEAYQKL (239 aa). 2 residues coordinate Mg(2+): Asp154 and Ser156. Ca(2+) is bound at residue Asp193. N-linked (GlcNAc...) asparagine glycosylation occurs at Asn233. Ca(2+)-binding residues include Asn249, Asp251, Pro253, and Glu254. A Mg(2+)-binding site is contributed by Glu254. Asn402 carries N-linked (GlcNAc...) asparagine glycosylation. N-linked (GlcNAc...) asparagine glycosylation is found at Asn421, Asn431, Asn456, and Asn466. I-EGF domains follow at residues 471 to 495, 499 to 547, 548 to 584, and 585 to 625; these read CEDN…FQCD, CHFD…KYCE, KDDF…DRCQ, and CPSA…RFCE. Residue Asn648 is glycosylated (N-linked (GlcNAc...) asparagine). Residues 685–704 traverse the membrane as a helical segment; it reads IFFIIFIVTFLIGLLKVLII. Residues 705-769 are Cytoplasmic-facing; it reads RQVILQWNSN…NAHETFRCNF (65 aa).

Belongs to the integrin beta chain family. Heterodimer of an alpha and a beta subunit. Beta-8 (ITGB8) associates with alpha-V (ITGAV) to form ITGAV:ITGB8. ITGAV:ITGB8 interacts with TGFB1. Placenta, kidney, brain, ovary, uterus and in several transformed cells. Transiently expressed in 293 human embryonic kidney cells.

It localises to the cell membrane. Integrin alpha-V:beta-8 (ITGAV:ITGB8) is a receptor for fibronectin. It recognizes the sequence R-G-D in its ligands. Integrin alpha-V:beta-6 (ITGAV:ITGB6) mediates R-G-D-dependent release of transforming growth factor beta-1 (TGF-beta-1) from regulatory Latency-associated peptide (LAP), thereby playing a key role in TGF-beta-1 activation on the surface of activated regulatory T-cells (Tregs). Required during vasculogenesis. This Homo sapiens (Human) protein is Integrin beta-8.